The primary structure comprises 491 residues: Ketol-acid reductoisomerase (NADP(+)) (491 aa).

The 194-residue stretch at 15 to 208 folds into the KARI N-terminal Rossmann domain; sequence AQLGKCRFMG…GGHRAGVLES (194 aa). NADP(+)-binding positions include 45 to 48, Arg-68, Arg-76, Ser-78, and 108 to 110; these read CGAQ and DKQ. The active site involves His-132. Residue Gly-158 participates in NADP(+) binding. KARI C-terminal knotted domains are found at residues 209 to 344 and 345 to 484; these read SFVA…TAPQ and YEGK…MTDM. Asp-217, Glu-221, Glu-389, and Glu-393 together coordinate Mg(2+). Ser-414 is a substrate binding site.

The protein belongs to the ketol-acid reductoisomerase family. Mg(2+) serves as cofactor.

The catalysed reaction is (2R)-2,3-dihydroxy-3-methylbutanoate + NADP(+) = (2S)-2-acetolactate + NADPH + H(+). It carries out the reaction (2R,3R)-2,3-dihydroxy-3-methylpentanoate + NADP(+) = (S)-2-ethyl-2-hydroxy-3-oxobutanoate + NADPH + H(+). Its pathway is amino-acid biosynthesis; L-isoleucine biosynthesis; L-isoleucine from 2-oxobutanoate: step 2/4. The protein operates within amino-acid biosynthesis; L-valine biosynthesis; L-valine from pyruvate: step 2/4. In terms of biological role, involved in the biosynthesis of branched-chain amino acids (BCAA). Catalyzes an alkyl-migration followed by a ketol-acid reduction of (S)-2-acetolactate (S2AL) to yield (R)-2,3-dihydroxy-isovalerate. In the isomerase reaction, S2AL is rearranged via a Mg-dependent methyl migration to produce 3-hydroxy-3-methyl-2-ketobutyrate (HMKB). In the reductase reaction, this 2-ketoacid undergoes a metal-dependent reduction by NADPH to yield (R)-2,3-dihydroxy-isovalerate. In Salmonella arizonae (strain ATCC BAA-731 / CDC346-86 / RSK2980), this protein is Ketol-acid reductoisomerase (NADP(+)).